We begin with the raw amino-acid sequence, 123 residues long: Small ribosomal subunit protein uS13 (123 aa).

The disordered stretch occupies residues 97–123 (PVRGQRTKTNARTRKGPRKTVGVRRKK).

Belongs to the universal ribosomal protein uS13 family. As to quaternary structure, part of the 30S ribosomal subunit. Forms a loose heterodimer with protein S19. Forms two bridges to the 50S subunit in the 70S ribosome.

In terms of biological role, located at the top of the head of the 30S subunit, it contacts several helices of the 16S rRNA. In the 70S ribosome it contacts the 23S rRNA (bridge B1a) and protein L5 of the 50S subunit (bridge B1b), connecting the 2 subunits; these bridges are implicated in subunit movement. Contacts the tRNAs in the A and P-sites. The sequence is that of Small ribosomal subunit protein uS13 from Pelotomaculum thermopropionicum (strain DSM 13744 / JCM 10971 / SI).